Reading from the N-terminus, the 295-residue chain is MNDKIVRATAKNGMVRIIGGITTNLVNEGSKIHECTPVAAAALGRMLTAGTLMGTTLKGEKESLTLKINGGGEAKGITITAHNDASVKGFIGNPYVTRELNDKGKLDVGGAIGKDGLLYVIKDLGLKEPYVGQVPIYSGEIAEDFAYYFTVSEQTPSAVSLGVLVDKDLSIKAAGGFIVQMMPDADELLADLVTYRLEEIPPITTLISEGKTIEEILEFIFEGMDLNILDSIEPSYKCDCSREKVEKALASIGKKDLQEIYDDGKNEEIVCNFCNTKYSFTTNDIGELLKNSIKK.

2 cysteine pairs are disulfide-bonded: Cys238/Cys240 and Cys271/Cys274.

The protein belongs to the HSP33 family. Under oxidizing conditions two disulfide bonds are formed involving the reactive cysteines. Under reducing conditions zinc is bound to the reactive cysteines and the protein is inactive.

The protein localises to the cytoplasm. Redox regulated molecular chaperone. Protects both thermally unfolding and oxidatively damaged proteins from irreversible aggregation. Plays an important role in the bacterial defense system toward oxidative stress. The sequence is that of 33 kDa chaperonin from Clostridium botulinum (strain Alaska E43 / Type E3).